The primary structure comprises 104 residues: Pyrimidine/purine nucleoside phosphorylase (104 aa).

The protein belongs to the nucleoside phosphorylase PpnP family.

The catalysed reaction is a purine D-ribonucleoside + phosphate = a purine nucleobase + alpha-D-ribose 1-phosphate. The enzyme catalyses adenosine + phosphate = alpha-D-ribose 1-phosphate + adenine. It carries out the reaction cytidine + phosphate = cytosine + alpha-D-ribose 1-phosphate. It catalyses the reaction guanosine + phosphate = alpha-D-ribose 1-phosphate + guanine. The catalysed reaction is inosine + phosphate = alpha-D-ribose 1-phosphate + hypoxanthine. The enzyme catalyses thymidine + phosphate = 2-deoxy-alpha-D-ribose 1-phosphate + thymine. It carries out the reaction uridine + phosphate = alpha-D-ribose 1-phosphate + uracil. It catalyses the reaction xanthosine + phosphate = alpha-D-ribose 1-phosphate + xanthine. Functionally, catalyzes the phosphorolysis of diverse nucleosides, yielding D-ribose 1-phosphate and the respective free bases. Can use uridine, adenosine, guanosine, cytidine, thymidine, inosine and xanthosine as substrates. Also catalyzes the reverse reactions. This Trichlorobacter lovleyi (strain ATCC BAA-1151 / DSM 17278 / SZ) (Geobacter lovleyi) protein is Pyrimidine/purine nucleoside phosphorylase.